We begin with the raw amino-acid sequence, 387 residues long: UDP-N-acetylglucosamine--N-acetylmuramyl-(pentapeptide) pyrophosphoryl-undecaprenol N-acetylglucosamine transferase (387 aa).

Residues 23-25 (TGG), asparagine 135, arginine 174, serine 203, isoleucine 261, 280-285 (ALTVSE), and glutamine 306 each bind UDP-N-acetyl-alpha-D-glucosamine.

This sequence belongs to the glycosyltransferase 28 family. MurG subfamily.

Its subcellular location is the cell inner membrane. It catalyses the reaction di-trans,octa-cis-undecaprenyl diphospho-N-acetyl-alpha-D-muramoyl-L-alanyl-D-glutamyl-meso-2,6-diaminopimeloyl-D-alanyl-D-alanine + UDP-N-acetyl-alpha-D-glucosamine = di-trans,octa-cis-undecaprenyl diphospho-[N-acetyl-alpha-D-glucosaminyl-(1-&gt;4)]-N-acetyl-alpha-D-muramoyl-L-alanyl-D-glutamyl-meso-2,6-diaminopimeloyl-D-alanyl-D-alanine + UDP + H(+). Its pathway is cell wall biogenesis; peptidoglycan biosynthesis. Cell wall formation. Catalyzes the transfer of a GlcNAc subunit on undecaprenyl-pyrophosphoryl-MurNAc-pentapeptide (lipid intermediate I) to form undecaprenyl-pyrophosphoryl-MurNAc-(pentapeptide)GlcNAc (lipid intermediate II). The protein is UDP-N-acetylglucosamine--N-acetylmuramyl-(pentapeptide) pyrophosphoryl-undecaprenol N-acetylglucosamine transferase of Colwellia psychrerythraea (strain 34H / ATCC BAA-681) (Vibrio psychroerythus).